The chain runs to 492 residues: Sestrin-1 (492 aa).

An N-terminal domain; may mediate the alkylhydroperoxide reductase activity region spans residues 71–252 (FADSFAALGR…ICDITNGNHS (182 aa)). The active-site Cysteine sulfenic acid (-SOH) intermediate is the cysteine 130. A phosphoserine mark is found at serine 293 and serine 314. Residues 321 to 492 (PARDVSRHFE…ALRAITRYMT (172 aa)) are C-terminal domain; mediates TORC1 regulation. L-leucine is bound by residues 386–389 (TYNT), threonine 398, and glutamate 463.

This sequence belongs to the sestrin family. In terms of assembly, interacts with the GATOR2 complex which is composed of MIOS, SEC13, SEH1L, WDR24 and WDR59; the interaction is negatively regulated by leucine. Interacts with RRAGA, RRAGB, RRAGC and RRAGD; may function as a guanine nucleotide dissociation inhibitor for RRAGs and regulate them. Interacts with KEAP1, RBX1 and SQSTM1; in the SQSTM1-dependent autophagic degradation of KEAP1. May interact with PRDX1.

It localises to the nucleus. The protein resides in the cytoplasm. The catalysed reaction is a hydroperoxide + L-cysteinyl-[protein] = S-hydroxy-L-cysteinyl-[protein] + an alcohol. In terms of biological role, functions as an intracellular leucine sensor that negatively regulates the TORC1 signaling pathway through the GATOR complex. In absence of leucine, binds the GATOR subcomplex GATOR2 and prevents TORC1 signaling. Binding of leucine to SESN2 disrupts its interaction with GATOR2 thereby activating the TORC1 signaling pathway. This stress-inducible metabolic regulator may also play a role in protection against oxidative and genotoxic stresses. May positively regulate the transcription by NFE2L2 of genes involved in the response to oxidative stress by facilitating the SQSTM1-mediated autophagic degradation of KEAP1. Moreover, may prevent the accumulation of reactive oxygen species (ROS) through the alkylhydroperoxide reductase activity born by the N-terminal domain of the protein. Was originally reported to contribute to oxidative stress resistance by reducing PRDX1. However, this could not be confirmed. The chain is Sestrin-1 from Macaca fascicularis (Crab-eating macaque).